The sequence spans 198 residues: Cerebellin-4 (198 aa).

The signal sequence occupies residues 1-24 (MGSARRALSVVPAVLLILVLPVWA). Residues N26 and N85 are each glycosylated (N-linked (GlcNAc...) asparagine). A C1q domain is found at 63 to 198 (AANSKVAFSA…TFSGFLVFPL (136 aa)).

In terms of assembly, homohexamer; disulfide-linked homotrimers. The trimers are assembled via the globular C1q domains. The trimers associate via N-terminal cysteine residues to form disulfide-linked hexamers. May form oligomers with CBLN1, CBLN2 and CBLN3 prior to secretion. Once secreted, does not interact with other CBLN family members. Strongly interacts with DCC in a NTN1-displaceable fashion. Weakly binds to NRXN1 and NRXN2 long and short isoforms produced by alternative promoter usage. Interaction with NRXN3 short isoform is hardly detectable; no interaction at all with NRXN3 long isoform. Does not interact with NEO1, GRID1 and GRID2. In terms of processing, sialoglycoprotein. In terms of tissue distribution, expressed in brain with high levels in particular thalamic nuclei. In the thalamus, predominantly expressed in neurons within the parafascicular nucleus. Found in the hippocampus, mostly in the dendrites and somata of pyramidal neurons (at protein level). Very low or no expression in most other brain regions. Highly expressed in the ventral medial habenula.

It localises to the secreted. The protein resides in the synapse. Its function is as follows. Acts as a synaptic organizer in specific subsets of neurons in the brain. Essential for the formation and maintenance of inhibitory GABAergic synapses. Promotes the development of dendrite-targeting inhibitory GABAergic synapses made by somatostatin-positive interneurons. May contribute to the function of ventral medial habenula region of the brain implicated in the regulation of anxiety-related behaviors. May play a role in CBLN3 export from the endoplasmic reticulum and secretion. This chain is Cerebellin-4 (Cbln4), found in Mus musculus (Mouse).